The chain runs to 334 residues: Dolichyl-phosphate beta-glucosyltransferase (334 aa).

The Lumenal segment spans residues 1-12; sequence MRALRFLIENRN. A helical membrane pass occupies residues 13 to 33; the sequence is TVFFTLLVALVLSLYLLVYLF. Residues 34–334 are Cytoplasmic-facing; it reads SHTPRPPYPE…LGIYRDNKKC (301 aa).

This sequence belongs to the glycosyltransferase 2 family.

Its subcellular location is the endoplasmic reticulum membrane. It catalyses the reaction a di-trans,poly-cis-dolichyl phosphate + UDP-alpha-D-glucose = a di-trans,poly-cis-dolichyl beta-D-glucosyl phosphate + UDP. The protein operates within protein modification; protein glycosylation. Its function is as follows. Endoplasmic reticulum membrane-bound UDP-glucose:dolichyl-phosphate glucosyltransferase involved in protein N-linked glycosylation. This chain is Dolichyl-phosphate beta-glucosyltransferase, found in Saccharomyces cerevisiae (strain ATCC 204508 / S288c) (Baker's yeast).